A 669-amino-acid chain; its full sequence is Dymeclin (669 aa).

The N-myristoyl glycine moiety is linked to residue G2.

It belongs to the dymeclin family. Post-translationally, myristoylated in vitro; myristoylation is not essential for protein targeting to Golgi compartment.

The protein resides in the cytoplasm. Its subcellular location is the golgi apparatus. Functionally, necessary for correct organization of Golgi apparatus. The polypeptide is Dymeclin (dym) (Xenopus laevis (African clawed frog)).